The primary structure comprises 411 residues: uncharacterized protein (411 aa).

The protein in the C-terminal section; belongs to the PAPS reductase family.

This is an uncharacterized protein from Methanocaldococcus jannaschii (strain ATCC 43067 / DSM 2661 / JAL-1 / JCM 10045 / NBRC 100440) (Methanococcus jannaschii).